The primary structure comprises 248 residues: E3 SUMO-protein ligase NSE2 (248 aa).

Methionine 1 carries the post-translational modification N-acetylmethionine. Residues lysine 92 and lysine 109 each participate in a glycyl lysine isopeptide (Lys-Gly) (interchain with G-Cter in SUMO2) cross-link. Residue serine 118 is modified to Phosphoserine. Residues lysine 127 and lysine 132 each participate in a glycyl lysine isopeptide (Lys-Gly) (interchain with G-Cter in SUMO2) cross-link. The SP-RING-type zinc finger occupies 156-242 (VDEDMIVTQS…LRRAIESHKK (87 aa)). Residues cysteine 187, histidine 189, cysteine 212, and cysteine 217 each contribute to the Zn(2+) site.

The protein belongs to the NSE2 family. In terms of assembly, component of the SMC5-SMC6 complex which consists at least of SMC5, SMC6, NSMCE2, NSMCE1, NSMCE4A or EID3 and NSMCE3. Post-translationally, sumoylated, possibly via autosumoylation.

The protein resides in the nucleus. It localises to the chromosome. The protein localises to the telomere. It is found in the PML body. The protein operates within protein modification; protein sumoylation. Functionally, E3 SUMO-protein ligase component of the SMC5-SMC6 complex, a complex involved in DNA double-strand break repair by homologous recombination. Is not be required for the stability of the complex. The complex may promote sister chromatid homologous recombination by recruiting the SMC1-SMC3 cohesin complex to double-strand breaks. Acts as an E3 ligase mediating SUMO attachment to various proteins such as SMC6L1 and TSNAX, the shelterin complex subunits TERF1, TERF2, TINF2 and TERF2IP, RAD51AP1, and maybe the cohesin components RAD21 and STAG2. Required for recruitment of telomeres to PML nuclear bodies. Required for sister chromatid cohesion during prometaphase and mitotic progression. The polypeptide is E3 SUMO-protein ligase NSE2 (NSMCE2) (Bos taurus (Bovine)).